Consider the following 592-residue polypeptide: Transcription factor MYC3 (592 aa).

Residues 82-141 (STGDNTVILGWGDGYYKGEEDKEKKKNNTNTAEQEHRKRVIRELNSLISGGIGVSDESND) are JAZ-interaction domain. 4 disordered regions span residues 261 to 313 (ENDP…VENQ), 341 to 361 (CGNESSKKRTSVSKGSNNDEG), 393 to 422 (EPPEKKPRKRGRKPANGREEPLNHVEAERQ), and 465 to 508 (QQAE…STAS). A compositionally biased stretch (low complexity) spans 278-293 (SPARVNNGNNSNSNSK). Positions 294 to 306 (SDSHQISKLEKND) are enriched in basic and acidic residues. The span at 352 to 361 (VSKGSNNDEG) shows a compositional bias: polar residues. The segment covering 398–407 (KPRKRGRKPA) has biased composition (basic residues). Basic and acidic residues-rich tracts occupy residues 408–422 (NGREEPLNHVEAERQ) and 468–482 (ESDKEEIQKKLDGMS). The 50-residue stretch at 411–460 (EEPLNHVEAERQRREKLNQRFYSLRAVVPNVSKMDKASLLGDAISYINEL) folds into the bHLH domain.

In terms of assembly, homo- and heterodimer. Interacts with MYB28, MYB29, MYB34, MYB51, MYB76, MYB122, MYC2, MYC4, AFPH2/NINJA and the JAZ repressors TIFY10A/JAZ1, TIFY10B/JAZ2, TIFY6B/JAZ3, TIFY11A/JAZ5, TIFY11B/JAZ6, TIFY5B/JAZ7, TIFY5A/JAZ8, TIFY7/JAZ9, TIFY9/JAZ10, TIFY3A/JAZ11 and TIFY3B/JAZ12. As to expression, constitutively expressed in roots, stems, leaves, flowers, and seedlings.

It localises to the nucleus. Transcription factor involved in tryptophan, jasmonic acid (JA) and other stress-responsive gene regulation. With MYC2 and MYC4, controls additively subsets of JA-dependent responses. Can form complexes with all known glucosinolate-related MYBs to regulate glucosinolate biosynthesis. Binds to the G-box (5'-CACGTG-3') of promoters. Activates multiple TIFY/JAZ promoters. This Arabidopsis thaliana (Mouse-ear cress) protein is Transcription factor MYC3 (MYC3).